The chain runs to 252 residues: Outer membrane protein P1 (252 aa).

The signal sequence occupies residues 1–23 (METTTKLAIGVSALCCLASAAFA).

This sequence belongs to the Coxiella porin P1 (CPP1) (TC 1.B.43) family. May form trimers.

The protein localises to the cell outer membrane. Its function is as follows. Able to form a pore in lipid bilayers. The polypeptide is Outer membrane protein P1 (ompP1) (Coxiella burnetii (strain RSA 493 / Nine Mile phase I)).